A 615-amino-acid chain; its full sequence is uncharacterized protein (615 aa).

Position 48 is a phosphoserine (serine 48). Acidic residues predominate over residues 424–433; the sequence is DRENELEEGS. Positions 424–615 are disordered; that stretch reads DRENELEEGS…YARKKTKKNV (192 aa). 4 stretches are compositionally biased toward basic and acidic residues: residues 439–476, 484–496, 504–521, and 529–561; these read DNER…KEVG, DGNK…KEVA, ESEK…KEVA, and ESEK…EPSK. 2 stretches are compositionally biased toward basic residues: residues 579-589 and 606-615; these read KKPKVVKKVAK and YARKKTKKNV.

This is an uncharacterized protein from Arabidopsis thaliana (Mouse-ear cress).